The primary structure comprises 213 residues: MSQISITSPKHCAKKGGININNRHKKLFFTFSTFFSGLLLIIFLVWLILHPERPEFSLTEADIYSLNLTTSSTHLLNSSVQLTLFSKNPNKKVGIYYDKLLVYAAYRGQQITSEASLPPFYQSHEEINLLTAFLQGTELPVAQSFGYQISRERSTGKIIIGMKMDGKLRWKIGTWVSGAYRFNVNCLAIVAFGMNMTTPPLASLQGTRCSTTI.

Over 1-27 the chain is Cytoplasmic; it reads MSQISITSPKHCAKKGGININNRHKKL. A helical membrane pass occupies residues 28 to 48; the sequence is FFTFSTFFSGLLLIIFLVWLI. Over 49 to 213 the chain is Lumenal; that stretch reads LHPERPEFSL…LQGTRCSTTI (165 aa). N-linked (GlcNAc...) asparagine glycosylation is found at Asn-67, Asn-77, and Asn-195.

As to expression, expressed in the vasculature of roots, rosette leaves, stems, cauline leaves and flowers. Specifically expressed in phloem.

The protein resides in the cell junction. Its subcellular location is the plasmodesma. The protein localises to the endoplasmic reticulum membrane. Involved in the regulation of sugar, amino acid and some primary metabolite export from companion cells (CCs) to sieve elements (SEs) in phloem. Required for apoplastic phloem sugar loading in source leaves in order to transport it to sink tissues. Required for correct sugar partitioning between source leaves and sink organs. The protein is NDR1/HIN1-like protein 26 of Arabidopsis thaliana (Mouse-ear cress).